The chain runs to 445 residues: FAS-associated factor 2-B (445 aa).

Residues 12 to 48 (DQTEKLLQFQDLTGIESIDQCRQTLQQHNWNIETAVQ) enclose the UBA domain. The stretch at 275–353 (SERLEREERN…ERKSECLPAE (79 aa)) forms a coiled coil. Residues 302–355 (RADQEKERKKKEKQDQKRREEEEAQRKQMLEERKKRNLEEEKERKSECLPAEPV) form a disordered region. Residues 303–348 (ADQEKERKKKEKQDQKRREEEEAQRKQMLEERKKRNLEEEKERKSE) are compositionally biased toward basic and acidic residues. The 83-residue stretch at 357–439 (DHPDNVKIIF…GLSQSQLLFV (83 aa)) folds into the UBX domain.

The protein resides in the cytoplasm. Its subcellular location is the lipid droplet. The protein localises to the endoplasmic reticulum. Its function is as follows. Plays an important role in endoplasmic reticulum-associated degradation (ERAD) that mediates ubiquitin-dependent degradation of misfolded endoplasmic reticulum proteins. Involved in inhibition of lipid droplet degradation. Involved in stress granule disassembly. The sequence is that of FAS-associated factor 2-B (faf2-b) from Xenopus laevis (African clawed frog).